We begin with the raw amino-acid sequence, 491 residues long: Alpha-2-antiplasmin (491 aa).

An N-terminal signal peptide occupies residues 1–27 (MALLRGLLVLSLSCLQGPCFTFSPVSA). Positions 28–39 (VDLPGQQPVSEQ) are excised as a propeptide. An intrachain disulfide couples Cys-70 to Cys-143. Asn-126, Asn-295, Asn-309, and Asn-316 each carry an N-linked (GlcNAc...) asparagine glycan. A disordered region spans residues 439-491 (SALPQLQEQRDSPDNRLIGQNDKADFHGGKTFGPDLKLAPRMEEDYPQFSSPK). Position 484 is a sulfotyrosine (Tyr-484).

This sequence belongs to the serpin family. In terms of assembly, forms protease inhibiting heterodimer with TMPRSS7. Proteolytically cleaved at Pro-35 by both the prolyl endopeptidase FAP form and antiplasmin-cleaving enzyme FAP soluble form to generate mature alpha-2-antiplasmin. In terms of tissue distribution, expressed by the liver and secreted in plasma.

The protein localises to the secreted. Its function is as follows. Serine protease inhibitor. The major targets of this inhibitor are plasmin and trypsin, but it also inactivates matriptase-3/TMPRSS7 and chymotrypsin. This is Alpha-2-antiplasmin (Serpinf2) from Mus musculus (Mouse).